A 164-amino-acid polypeptide reads, in one-letter code: Phosphopantetheine adenylyltransferase (164 aa).

Ser11 is a binding site for substrate. ATP is bound by residues 11-12 (SF) and His19. Substrate is bound by residues Lys43, Leu75, and Arg89. Residues 90–92 (GLR), Glu100, and 125–131 (YGYLSSS) contribute to the ATP site.

The protein belongs to the bacterial CoaD family. As to quaternary structure, homohexamer. Mg(2+) serves as cofactor.

It localises to the cytoplasm. It catalyses the reaction (R)-4'-phosphopantetheine + ATP + H(+) = 3'-dephospho-CoA + diphosphate. Its pathway is cofactor biosynthesis; coenzyme A biosynthesis; CoA from (R)-pantothenate: step 4/5. Reversibly transfers an adenylyl group from ATP to 4'-phosphopantetheine, yielding dephospho-CoA (dPCoA) and pyrophosphate. In Geobacter sulfurreducens (strain ATCC 51573 / DSM 12127 / PCA), this protein is Phosphopantetheine adenylyltransferase.